Here is a 177-residue protein sequence, read N- to C-terminus: Phycocyanin-645 beta chain (177 aa).

Y18 is a binding site for mesobiliverdin. The (2R,3E)-phycocyanobilin site is built by K28, N35, and D39. 15,16-dihydrobiliverdin contacts are provided by C50, D54, and C61. Positions 77, 82, 84, and 85 each coordinate (2R,3E)-phycocyanobilin. A 15,16-dihydrobiliverdin-binding site is contributed by Q148. Positions 154, 156, and 158 each coordinate (2R,3E)-phycocyanobilin.

It belongs to the phycobiliprotein family. Heterotetramer of 2 different alpha chains and 2 identical beta chains which form 2 alpha-beta heterodimers within the heterotetramer. Post-translationally, contains two phycocyanobilin chromophores, one mesobiliverdin chromophore and one 15,16-dihydrobiliverdin chromophore with binding mediated by both the alpha and beta subunits.

It localises to the plastid. Its subcellular location is the chloroplast thylakoid membrane. In terms of biological role, light-harvesting photosynthetic tetrapyrrole chromophore-protein from the phycobiliprotein complex. This chain is Phycocyanin-645 beta chain, found in Chroomonas sp.